A 244-amino-acid polypeptide reads, in one-letter code: MFLLNSLSRITRGNRSKRHQNLSDASSSSGSFSKKSSTSQLVRTGSPSVEPTALYLQQPFVRTHLVKGNFSTIVSLPRFVDLDEWVALNVYELFTYLNHFYDVFATFCTVKTCPVMSAAANFDYTWLDNNRKPVHLPAPQYIEYVLAWIENRLHDQNVFPTKAGLPFPSNFLVIVKAIYKQMFRIFAHMYYAHYAEILHLSLEAHWNSFFAHFIAFGKEFQLLDKRDTAPLKDLIVVLENQGNI.

The disordered stretch occupies residues 14-45 (NRSKRHQNLSDASSSSGSFSKKSSTSQLVRTG). Over residues 23–39 (SDASSSSGSFSKKSSTS) the composition is skewed to low complexity. Phosphoserine occurs at positions 46 and 48.

It belongs to the MOB1/phocein family. Interacts with orb6.

It is found in the cytoplasm. The protein localises to the cell cortex. Functionally, required for coordinating polarized cell growth during interphase with the onset of mitosis. The chain is Maintenance of ploidy protein mob2 (mob2) from Schizosaccharomyces pombe (strain 972 / ATCC 24843) (Fission yeast).